The following is a 101-amino-acid chain: NADH-quinone oxidoreductase subunit K (101 aa).

The next 3 helical transmembrane spans lie at 5-25 (LTHY…GIIL), 30-50 (IVIL…LVAF), and 61-81 (VLVF…LALI).

The protein belongs to the complex I subunit 4L family. In terms of assembly, NDH-1 is composed of 14 different subunits. Subunits NuoA, H, J, K, L, M, N constitute the membrane sector of the complex.

The protein localises to the cell inner membrane. The enzyme catalyses a quinone + NADH + 5 H(+)(in) = a quinol + NAD(+) + 4 H(+)(out). In terms of biological role, NDH-1 shuttles electrons from NADH, via FMN and iron-sulfur (Fe-S) centers, to quinones in the respiratory chain. The immediate electron acceptor for the enzyme in this species is believed to be ubiquinone. Couples the redox reaction to proton translocation (for every two electrons transferred, four hydrogen ions are translocated across the cytoplasmic membrane), and thus conserves the redox energy in a proton gradient. The polypeptide is NADH-quinone oxidoreductase subunit K (Methylacidiphilum infernorum (isolate V4) (Methylokorus infernorum (strain V4))).